Here is a 76-residue protein sequence, read N- to C-terminus: ATP synthase subunit 9, mitochondrial (76 aa).

2 helical membrane-spanning segments follow: residues 14 to 34 and 48 to 68; these read ISTI…AALI and FPFA…CLMV.

The protein belongs to the ATPase C chain family. In terms of assembly, F-type ATPases have 2 components, CF(1) - the catalytic core - and CF(0) - the membrane proton channel. CF(1) has five subunits: alpha(3), beta(3), gamma(1), delta(1), epsilon(1). CF(0) has three main subunits: a, b and c.

The protein localises to the mitochondrion membrane. Its function is as follows. Mitochondrial membrane ATP synthase (F(1)F(0) ATP synthase or Complex V) produces ATP from ADP in the presence of a proton gradient across the membrane which is generated by electron transport complexes of the respiratory chain. F-type ATPases consist of two structural domains, F(1) - containing the extramembraneous catalytic core and F(0) - containing the membrane proton channel, linked together by a central stalk and a peripheral stalk. During catalysis, ATP synthesis in the catalytic domain of F(1) is coupled via a rotary mechanism of the central stalk subunits to proton translocation. Part of the complex F(0) domain. A homomeric c-ring of probably 10 subunits is part of the complex rotary element. The protein is ATP synthase subunit 9, mitochondrial (ATP9) of Cyberlindnera mrakii (Yeast).